A 501-amino-acid chain; its full sequence is GDP-fucose protein O-fucosyltransferase 4 (501 aa).

Residues 1-10 lie on the Cytoplasmic side of the membrane; it reads MLLQMAGRGK. The helical; Signal-anchor for type II membrane protein transmembrane segment at 11-31 threads the bilayer; it reads MVPCVCLGLLGVLCWVWVSFA. Residues 32 to 501 lie on the Lumenal side of the membrane; it reads SFPDEQLSLG…MAVRRARGKN (470 aa). An N-linked (GlcNAc...) asparagine glycan is attached at N173. A disulfide bond links C396 and C399. Residues N428 and N478 are each glycosylated (N-linked (GlcNAc...) asparagine).

The protein belongs to the glycosyltransferase 10 family.

It localises to the endoplasmic reticulum membrane. The enzyme catalyses L-threonyl-[protein] + GDP-beta-L-fucose = 3-O-(alpha-L-fucosyl)-L-threonyl-[protein] + GDP + H(+). It catalyses the reaction L-seryl-[protein] + GDP-beta-L-fucose = 3-O-(alpha-L-fucosyl)-L-seryl-[protein] + GDP + H(+). Its pathway is protein modification; protein glycosylation. Protein O-fucosyltransferase that specifically catalyzes O-fucosylation of serine or threonine residues in EMI domains of target proteins. Attaches fucose through an O-glycosidic linkage. O-fucosylation of EMI domain-containing proteins may be required for facilitating protein folding and secretion. The sequence is that of GDP-fucose protein O-fucosyltransferase 4 (fut11) from Takifugu rubripes (Japanese pufferfish).